We begin with the raw amino-acid sequence, 110 residues long: V-type proton ATPase subunit F (110 aa).

Belongs to the V-ATPase F subunit family. In terms of assembly, V-ATPase is a heteromultimeric enzyme made up of two complexes: the ATP-hydrolytic V1 complex and the proton translocation V0 complex. The V1 complex consists of three catalytic AB heterodimers that form a heterohexamer, three peripheral stalks each consisting of EG heterodimers, one central rotor including subunits D and F, and the regulatory subunits C and H. The proton translocation complex V0 consists of the proton transport subunit a, a ring of proteolipid subunits c9c'', rotary subunit d, subunits e and f, and two accessory subunits.

In terms of biological role, subunit of the V1 complex of vacuolar(H+)-ATPase (V-ATPase), a multisubunit enzyme composed of a peripheral complex (V1) that hydrolyzes ATP and a membrane integral complex (V0) that translocates protons. V-ATPase is responsible for acidifying and maintaining the pH of intracellular compartments and in some cell types, is targeted to the plasma membrane, where it is responsible for acidifying the extracellular environment. This Xenopus laevis (African clawed frog) protein is V-type proton ATPase subunit F (atp6s14).